A 158-amino-acid chain; its full sequence is Lipoprotein signal peptidase (158 aa).

4 helical membrane passes run 7-27, 38-58, 67-87, and 95-115; these read LFWIAAFIAFFVDQLTKYWVV, ILPGIFHFTYVTNTGAAFSLF, WLSLGVSLLLIGLALLGPVLD, and GLILGGAMGNGIDRFALGYVV. Catalysis depends on residues Asp-116 and Asp-132. The helical transmembrane segment at 125-145 threads the bilayer; it reads FAVFNMADSFISIGIVCLLLA.

This sequence belongs to the peptidase A8 family.

It is found in the cell inner membrane. The enzyme catalyses Release of signal peptides from bacterial membrane prolipoproteins. Hydrolyzes -Xaa-Yaa-Zaa-|-(S,diacylglyceryl)Cys-, in which Xaa is hydrophobic (preferably Leu), and Yaa (Ala or Ser) and Zaa (Gly or Ala) have small, neutral side chains.. It functions in the pathway protein modification; lipoprotein biosynthesis (signal peptide cleavage). Functionally, this protein specifically catalyzes the removal of signal peptides from prolipoproteins. The chain is Lipoprotein signal peptidase from Nostoc sp. (strain PCC 7120 / SAG 25.82 / UTEX 2576).